Here is a 459-residue protein sequence, read N- to C-terminus: uncharacterized protein (459 aa).

Positions threonine 13–lysine 145 constitute a B12-binding domain. The Radical SAM core domain maps to alanine 188 to aspartate 402. Residues cysteine 202, cysteine 206, and cysteine 209 each coordinate [4Fe-4S] cluster.

The protein belongs to the methyltransferase superfamily. Requires [4Fe-4S] cluster as cofactor.

This is an uncharacterized protein from Pyrococcus horikoshii (strain ATCC 700860 / DSM 12428 / JCM 9974 / NBRC 100139 / OT-3).